We begin with the raw amino-acid sequence, 335 residues long: Ubiquinone biosynthesis protein COQ4, mitochondrial (335 aa).

A mitochondrion-targeting transit peptide spans 1-10; that stretch reads MLRLSLLRST. Positions 210, 211, 214, and 226 each coordinate Zn(2+).

Belongs to the COQ4 family. In terms of assembly, component of a multi-subunit COQ enzyme complex, composed of at least COQ3, COQ4, COQ5, COQ6, COQ7 and COQ9. Interacts with COQ3. Requires Zn(2+) as cofactor.

The protein resides in the mitochondrion inner membrane. It carries out the reaction 4-hydroxy-3-methoxy-5-(all-trans-hexaprenyl)benzoate + H(+) = 2-methoxy-6-(all-trans-hexaprenyl)phenol + CO2. It participates in cofactor biosynthesis; ubiquinone biosynthesis. In terms of biological role, lyase that catalyzes the C1-decarboxylation of 4-hydroxy-3-methoxy-5-(all-trans-hexaprenyl)benzoic acid into 2-methoxy-6-(all-trans-hexaprenyl)phenol during ubiquinone biosynthesis. In Saccharomyces cerevisiae (strain RM11-1a) (Baker's yeast), this protein is Ubiquinone biosynthesis protein COQ4, mitochondrial.